A 308-amino-acid polypeptide reads, in one-letter code: Probable 5-dehydro-4-deoxyglucarate dehydratase (308 aa).

This sequence belongs to the DapA family.

The enzyme catalyses 5-dehydro-4-deoxy-D-glucarate + H(+) = 2,5-dioxopentanoate + CO2 + H2O. It participates in carbohydrate acid metabolism; D-glucarate degradation; 2,5-dioxopentanoate from D-glucarate: step 2/2. This chain is Probable 5-dehydro-4-deoxyglucarate dehydratase, found in Oceanobacillus iheyensis (strain DSM 14371 / CIP 107618 / JCM 11309 / KCTC 3954 / HTE831).